We begin with the raw amino-acid sequence, 375 residues long: Protein arginine N-methyltransferase 6 (375 aa).

The interval 1–38 is disordered; sequence MSQPKKRKLESGGGGEGGEGTEEEDGAEREAALERPRR. The residue at position 21 (Thr-21) is a Phosphothreonine. Basic and acidic residues predominate over residues 28-38; that stretch reads EREAALERPRR. Residues Arg-29, Arg-35, and Arg-37 each carry the asymmetric dimethylarginine; by autocatalysis modification. The SAM-dependent MTase PRMT-type domain occupies 44 to 374; that stretch reads DQLYYECYSD…EEKTKDFAME (331 aa). The S-adenosyl-L-methionine site is built by His-57, Arg-66, Gly-90, Glu-112, and Glu-141. Catalysis depends on residues Glu-155 and Glu-164.

It belongs to the class I-like SAM-binding methyltransferase superfamily. Protein arginine N-methyltransferase family. PRMT6 subfamily. As to quaternary structure, interacts with EPB41L3 and NCOA1. In terms of assembly, (Microbial infection) Interacts with (and methylates) HIV-1 Tat, Rev and Nucleocapsid protein p7 (NC). (Microbial infection) Interacts with human cytomegalovirus protein UL69. In terms of processing, automethylation enhances its stability and antiretroviral activity. In terms of tissue distribution, highly expressed in kidney and testis.

It is found in the nucleus. The enzyme catalyses L-arginyl-[protein] + 2 S-adenosyl-L-methionine = N(omega),N(omega)-dimethyl-L-arginyl-[protein] + 2 S-adenosyl-L-homocysteine + 2 H(+). Arginine methyltransferase that can catalyze the formation of both omega-N monomethylarginine (MMA) and asymmetrical dimethylarginine (aDMA), with a strong preference for the formation of aDMA. Preferentially methylates arginyl residues present in a glycine and arginine-rich domain and displays preference for monomethylated substrates. Specifically mediates the asymmetric dimethylation of histone H3 'Arg-2' to form H3R2me2a. H3R2me2a represents a specific tag for epigenetic transcriptional repression and is mutually exclusive with methylation on histone H3 'Lys-4' (H3K4me2 and H3K4me3). Acts as a transcriptional repressor of various genes such as HOXA2, THBS1 and TP53. Repression of TP53 blocks cellular senescence. Also methylates histone H2A and H4 'Arg-3' (H2AR3me and H4R3me, respectively). Acts as a regulator of DNA base excision during DNA repair by mediating the methylation of DNA polymerase beta (POLB), leading to the stimulation of its polymerase activity by enhancing DNA binding and processivity. Methylates HMGA1. Regulates alternative splicing events. Acts as a transcriptional coactivator of a number of steroid hormone receptors including ESR1, ESR2, PGR and NR3C1. Promotes fasting-induced transcriptional activation of the gluconeogenic program through methylation of the CRTC2 transcription coactivator. May play a role in innate immunity against HIV-1 in case of infection by methylating and impairing the function of various HIV-1 proteins such as Tat, Rev and Nucleocapsid protein p7 (NC). Methylates GPS2, protecting GPS2 from ubiquitination and degradation. Methylates SIRT7, inhibiting SIRT7 histone deacetylase activity and promoting mitochondria biogenesis. The protein is Protein arginine N-methyltransferase 6 (PRMT6) of Homo sapiens (Human).